The sequence spans 90 residues: Molybdopterin synthase sulfur carrier subunit (90 aa).

Gly-90 carries the post-translational modification 1-thioglycine; alternate. The residue at position 90 (Gly-90) is a Glycyl adenylate; alternate.

The protein belongs to the MoaD family. MOCS2A subfamily. In terms of assembly, heterotetramer; composed of 2 small (Mocs2A) and 2 large (Mocs2B) subunits. In terms of processing, C-terminal thiocarboxylation occurs in 2 steps, it is first acyl-adenylated (-COAMP) via the hesA/moeB/thiF part of MOCS3, then thiocarboxylated (-COSH) via the rhodanese domain of MOCS3.

It is found in the cytoplasm. It functions in the pathway cofactor biosynthesis; molybdopterin biosynthesis. Acts as a sulfur carrier required for molybdopterin biosynthesis. Component of the molybdopterin synthase complex that catalyzes the conversion of precursor Z into molybdopterin by mediating the incorporation of 2 sulfur atoms into precursor Z to generate a dithiolene group. In the complex, serves as sulfur donor by being thiocarboxylated (-COSH) at its C-terminus by MOCS3. After interaction with Mocs2B, the sulfur is then transferred to precursor Z to form molybdopterin. This chain is Molybdopterin synthase sulfur carrier subunit, found in Drosophila yakuba (Fruit fly).